The chain runs to 162 residues: Putative 4-hydroxy-4-methyl-2-oxoglutarate aldolase (162 aa).

Substrate is bound by residues 75–78 and Arg-97; that span reads GDML. A divalent metal cation is bound at residue Asp-98.

Belongs to the class II aldolase/RraA-like family. As to quaternary structure, homotrimer. It depends on a divalent metal cation as a cofactor.

The catalysed reaction is 4-hydroxy-4-methyl-2-oxoglutarate = 2 pyruvate. It catalyses the reaction oxaloacetate + H(+) = pyruvate + CO2. Catalyzes the aldol cleavage of 4-hydroxy-4-methyl-2-oxoglutarate (HMG) into 2 molecules of pyruvate. Also contains a secondary oxaloacetate (OAA) decarboxylase activity due to the common pyruvate enolate transition state formed following C-C bond cleavage in the retro-aldol and decarboxylation reactions. The sequence is that of Putative 4-hydroxy-4-methyl-2-oxoglutarate aldolase from Stutzerimonas stutzeri (strain A1501) (Pseudomonas stutzeri).